A 165-amino-acid chain; its full sequence is Putative pre-16S rRNA nuclease (165 aa).

This sequence belongs to the YqgF nuclease family.

It is found in the cytoplasm. Could be a nuclease involved in processing of the 5'-end of pre-16S rRNA. The protein is Putative pre-16S rRNA nuclease of Brucella anthropi (strain ATCC 49188 / DSM 6882 / CCUG 24695 / JCM 21032 / LMG 3331 / NBRC 15819 / NCTC 12168 / Alc 37) (Ochrobactrum anthropi).